The chain runs to 261 residues: Indole-3-glycerol phosphate synthase (261 aa).

This sequence belongs to the TrpC family.

It carries out the reaction 1-(2-carboxyphenylamino)-1-deoxy-D-ribulose 5-phosphate + H(+) = (1S,2R)-1-C-(indol-3-yl)glycerol 3-phosphate + CO2 + H2O. Its pathway is amino-acid biosynthesis; L-tryptophan biosynthesis; L-tryptophan from chorismate: step 4/5. This chain is Indole-3-glycerol phosphate synthase, found in Burkholderia lata (strain ATCC 17760 / DSM 23089 / LMG 22485 / NCIMB 9086 / R18194 / 383).